A 314-amino-acid polypeptide reads, in one-letter code: tRNA dimethylallyltransferase 1 (314 aa).

8-15 (GPTGTGKS) contributes to the ATP binding site. Substrate is bound at residue 10–15 (TGTGKS).

This sequence belongs to the IPP transferase family. As to quaternary structure, monomer. It depends on Mg(2+) as a cofactor.

It catalyses the reaction adenosine(37) in tRNA + dimethylallyl diphosphate = N(6)-dimethylallyladenosine(37) in tRNA + diphosphate. In terms of biological role, catalyzes the transfer of a dimethylallyl group onto the adenine at position 37 in tRNAs that read codons beginning with uridine, leading to the formation of N6-(dimethylallyl)adenosine (i(6)A). The chain is tRNA dimethylallyltransferase 1 from Mycobacterium marinum (strain ATCC BAA-535 / M).